Reading from the N-terminus, the 312-residue chain is Ribose-phosphate pyrophosphokinase (312 aa).

ATP contacts are provided by residues 34–36 (DQE) and 93–94 (RQ). Mg(2+)-binding residues include His127 and Asp167. The active site involves Lys191. D-ribose 5-phosphate-binding positions include Arg193, Asp217, and 221–225 (DSGGT).

It belongs to the ribose-phosphate pyrophosphokinase family. Class I subfamily. Homohexamer. The cofactor is Mg(2+).

Its subcellular location is the cytoplasm. It catalyses the reaction D-ribose 5-phosphate + ATP = 5-phospho-alpha-D-ribose 1-diphosphate + AMP + H(+). The protein operates within metabolic intermediate biosynthesis; 5-phospho-alpha-D-ribose 1-diphosphate biosynthesis; 5-phospho-alpha-D-ribose 1-diphosphate from D-ribose 5-phosphate (route I): step 1/1. Its function is as follows. Involved in the biosynthesis of the central metabolite phospho-alpha-D-ribosyl-1-pyrophosphate (PRPP) via the transfer of pyrophosphoryl group from ATP to 1-hydroxyl of ribose-5-phosphate (Rib-5-P). This chain is Ribose-phosphate pyrophosphokinase, found in Hyphomonas neptunium (strain ATCC 15444).